The primary structure comprises 257 residues: Imidazole glycerol phosphate synthase subunit HisF (257 aa).

Active-site residues include Asp-12 and Asp-131.

Belongs to the HisA/HisF family. Heterodimer of HisH and HisF.

It localises to the cytoplasm. It carries out the reaction 5-[(5-phospho-1-deoxy-D-ribulos-1-ylimino)methylamino]-1-(5-phospho-beta-D-ribosyl)imidazole-4-carboxamide + L-glutamine = D-erythro-1-(imidazol-4-yl)glycerol 3-phosphate + 5-amino-1-(5-phospho-beta-D-ribosyl)imidazole-4-carboxamide + L-glutamate + H(+). It functions in the pathway amino-acid biosynthesis; L-histidine biosynthesis; L-histidine from 5-phospho-alpha-D-ribose 1-diphosphate: step 5/9. Functionally, IGPS catalyzes the conversion of PRFAR and glutamine to IGP, AICAR and glutamate. The HisF subunit catalyzes the cyclization activity that produces IGP and AICAR from PRFAR using the ammonia provided by the HisH subunit. In Hydrogenovibrio crunogenus (strain DSM 25203 / XCL-2) (Thiomicrospira crunogena), this protein is Imidazole glycerol phosphate synthase subunit HisF.